Here is a 137-residue protein sequence, read N- to C-terminus: ATP synthase epsilon chain, chloroplastic (137 aa).

This sequence belongs to the ATPase epsilon chain family. As to quaternary structure, F-type ATPases have 2 components, CF(1) - the catalytic core - and CF(0) - the membrane proton channel. CF(1) has five subunits: alpha(3), beta(3), gamma(1), delta(1), epsilon(1). CF(0) has three main subunits: a, b and c.

The protein localises to the plastid. Its subcellular location is the chloroplast thylakoid membrane. Functionally, produces ATP from ADP in the presence of a proton gradient across the membrane. In Bigelowiella natans (Pedinomonas minutissima), this protein is ATP synthase epsilon chain, chloroplastic.